The chain runs to 331 residues: DNA-directed RNA polymerase subunit alpha (331 aa).

The segment at 1–225 is alpha N-terminal domain (alpha-NTD); that stretch reads MLDIAMPKLE…QYSSIIADFN (225 aa). An alpha C-terminal domain (alpha-CTD) region spans residues 243–331; the sequence is PSEIYDMPIE…AARLNDGSAE (89 aa).

This sequence belongs to the RNA polymerase alpha chain family. In terms of assembly, homodimer. The RNAP catalytic core consists of 2 alpha, 1 beta, 1 beta' and 1 omega subunit. When a sigma factor is associated with the core the holoenzyme is formed, which can initiate transcription.

The enzyme catalyses RNA(n) + a ribonucleoside 5'-triphosphate = RNA(n+1) + diphosphate. Functionally, DNA-dependent RNA polymerase catalyzes the transcription of DNA into RNA using the four ribonucleoside triphosphates as substrates. In Herpetosiphon aurantiacus (strain ATCC 23779 / DSM 785 / 114-95), this protein is DNA-directed RNA polymerase subunit alpha.